The chain runs to 98 residues: Ferredoxin-like protein (98 aa).

It to ferredoxins from P.putida and C.tartarivorum, ferredoxin I from A.vinelandii, ferredoxin II from D.desulfuricans.

Its function is as follows. Could be a 3Fe-4S cluster-containing protein. This Rhizobium leguminosarum protein is Ferredoxin-like protein (fixX).